Consider the following 257-residue polypeptide: Tryptophan synthase alpha chain (257 aa).

Catalysis depends on proton acceptor residues Glu-47 and Asp-58.

The protein belongs to the TrpA family. As to quaternary structure, tetramer of two alpha and two beta chains.

The catalysed reaction is (1S,2R)-1-C-(indol-3-yl)glycerol 3-phosphate + L-serine = D-glyceraldehyde 3-phosphate + L-tryptophan + H2O. It functions in the pathway amino-acid biosynthesis; L-tryptophan biosynthesis; L-tryptophan from chorismate: step 5/5. In terms of biological role, the alpha subunit is responsible for the aldol cleavage of indoleglycerol phosphate to indole and glyceraldehyde 3-phosphate. The chain is Tryptophan synthase alpha chain from Listeria welshimeri serovar 6b (strain ATCC 35897 / DSM 20650 / CCUG 15529 / CIP 8149 / NCTC 11857 / SLCC 5334 / V8).